A 259-amino-acid polypeptide reads, in one-letter code: MDPIALQAGFDLLNDGRPETLWLGIGTLLMLIGTFYFIARGWGVTDKEAREYYAITILVPGIASAAYLAMFFGIGVTEVELASGTVLDIYYARYADWLFTTPLLLLDLALLAKVDRVTIGTLIGVDALMIVTGLIGALSKTPLARYTWWLFSTIAFLFVLYYLLTSLRSAAAKRSEEVRSTFNTLTALVAVLWTAYPILWIVGTEGAGVVGLGIETLAFMVLDVTAKVGFGFVLLRSRAILGETEAPEPSAGADASAAD.

A propeptide spanning residues 1–6 (MDPIAL) is cleaved from the precursor. At Q7 the chain carries Pyrrolidone carboxylic acid. Topologically, residues 7-18 (QAGFDLLNDGRP) are extracellular. A helical membrane pass occupies residues 19 to 40 (ETLWLGIGTLLMLIGTFYFIAR). The Cytoplasmic segment spans residues 41–49 (GWGVTDKEA). A helical membrane pass occupies residues 50 to 71 (REYYAITILVPGIASAAYLAMF). At 72 to 90 (FGIGVTEVELASGTVLDIY) the chain is on the extracellular side. The chain crosses the membrane as a helical span at residues 91-112 (YARYADWLFTTPLLLLDLALLA). The Cytoplasmic portion of the chain corresponds to 113 to 115 (KVD). Residues 116 to 138 (RVTIGTLIGVDALMIVTGLIGAL) traverse the membrane as a helical segment. Residues 139-142 (SKTP) lie on the Extracellular side of the membrane. Residues 143–171 (LARYTWWLFSTIAFLFVLYYLLTSLRSAA) traverse the membrane as a helical segment. Residues 172 to 174 (AKR) lie on the Cytoplasmic side of the membrane. A helical membrane pass occupies residues 175-203 (SEEVRSTFNTLTALVAVLWTAYPILWIVG). Residues 204–211 (TEGAGVVG) lie on the Extracellular side of the membrane. Residues 212–244 (LGIETLAFMVLDVTAKVGFGFVLLRSRAILGET) form a helical membrane-spanning segment. K227 carries the N6-(retinylidene)lysine modification. Topologically, residues 245–259 (EAPEPSAGADASAAD) are cytoplasmic.

The protein belongs to the archaeal/bacterial/fungal opsin family.

It localises to the cell membrane. Its function is as follows. Light-driven proton pump. It may interact with bacterioruberin in the claret membrane. The polypeptide is Archaerhodopsin-2 (Halobacterium sp. (strain aus-2)).